A 747-amino-acid polypeptide reads, in one-letter code: Tripartite terminase subunit 3 (747 aa).

The short motif at 194 to 198 (KRAKV) is the Nuclear localization signal element. The short motif at 267 to 274 (VPRRHGKT) is the Walker A motif element. Positions 361 to 366 (LLFVDE) match the Walker B motif motif. The For ATPase activity role is filled by E366. Active-site for nuclease activity residues include D521, E593, and D722.

The protein belongs to the herpesviridae TRM3 protein family. As to quaternary structure, interacts with the terminase subunits TRM1 and TRM2. Interacts with portal protein.

The protein resides in the host nucleus. In terms of biological role, component of the molecular motor that translocates viral genomic DNA in empty capsid during DNA packaging. Forms a tripartite terminase complex together with TRM1 and TRM2 in the host cytoplasm. Once the complex reaches the host nucleus, it interacts with the capsid portal vertex. This portal forms a ring in which genomic DNA is translocated into the capsid. TRM3 carries an RNase H-like nuclease activity that plays an important role for the cleavage of concatemeric viral DNA into unit length genomes. This is Tripartite terminase subunit 3 from Homo sapiens (Human).